A 373-amino-acid polypeptide reads, in one-letter code: 3-dehydroquinate synthase (373 aa).

Residues 120–124 (GVVGD), 144–145 (TT), K157, K166, and 184–187 (FLKT) each bind NAD(+). Zn(2+) contacts are provided by E199, H262, and H278.

The protein belongs to the sugar phosphate cyclases superfamily. Dehydroquinate synthase family. NAD(+) serves as cofactor. Co(2+) is required as a cofactor. It depends on Zn(2+) as a cofactor.

The protein resides in the cytoplasm. The catalysed reaction is 7-phospho-2-dehydro-3-deoxy-D-arabino-heptonate = 3-dehydroquinate + phosphate. The protein operates within metabolic intermediate biosynthesis; chorismate biosynthesis; chorismate from D-erythrose 4-phosphate and phosphoenolpyruvate: step 2/7. In terms of biological role, catalyzes the conversion of 3-deoxy-D-arabino-heptulosonate 7-phosphate (DAHP) to dehydroquinate (DHQ). This Clostridium tetani (strain Massachusetts / E88) protein is 3-dehydroquinate synthase.